Consider the following 105-residue polypeptide: Large ribosomal subunit protein P2 (105 aa).

The interval 84-105 (AEAKKEEPEEEADDDMGFGLFD) is disordered.

This sequence belongs to the eukaryotic ribosomal protein P1/P2 family. As to quaternary structure, P1 and P2 exist as dimers at the large ribosomal subunit. Phosphorylated.

Plays an important role in the elongation step of protein synthesis. This is Large ribosomal subunit protein P2 (ARP-1) from Leishmania donovani.